A 118-amino-acid chain; its full sequence is Deoxynogalonate monooxygenase (118 aa).

The ABM domain maps to 14–100 (VTFVNRFTVH…ALSTSEHGLF (87 aa)).

In terms of assembly, homodimer.

The catalysed reaction is deoxynogalonate + O2 = nogalonate + H2O + H(+). The protein operates within antibiotic biosynthesis. Involved in the biosynthesis of the anthracycline (aromatic polyketide) antibiotic nogalamycin. Catalyzes the oxygenation of 12-deoxy-nogalonic acid at position 12 to yield nogalonic acid. This Streptomyces nogalater protein is Deoxynogalonate monooxygenase.